The primary structure comprises 196 residues: ATP-dependent Clp protease proteolytic subunit (196 aa).

Serine 98 functions as the Nucleophile in the catalytic mechanism. The active site involves histidine 123.

The protein belongs to the peptidase S14 family. In terms of assembly, fourteen ClpP subunits assemble into 2 heptameric rings which stack back to back to give a disk-like structure with a central cavity, resembling the structure of eukaryotic proteasomes.

The protein localises to the cytoplasm. The catalysed reaction is Hydrolysis of proteins to small peptides in the presence of ATP and magnesium. alpha-casein is the usual test substrate. In the absence of ATP, only oligopeptides shorter than five residues are hydrolyzed (such as succinyl-Leu-Tyr-|-NHMec, and Leu-Tyr-Leu-|-Tyr-Trp, in which cleavage of the -Tyr-|-Leu- and -Tyr-|-Trp bonds also occurs).. Functionally, cleaves peptides in various proteins in a process that requires ATP hydrolysis. Has a chymotrypsin-like activity. Plays a major role in the degradation of misfolded proteins. This Actinobacillus pleuropneumoniae serotype 7 (strain AP76) protein is ATP-dependent Clp protease proteolytic subunit.